Reading from the N-terminus, the 654-residue chain is MLGFRSPIRLCKLSALGSAPLLPISRPKLFSTAVARYAADMETVNTTERLARLRQLMQEHKVDVYIVPSEDSHQSEYIAPCDGRREFISGFSGSAGTAIVSMTKAALSTDGRYFNQASKQLDSNWELLKRGVENVPTWQEWTTEQAEGGKVVGVDPSLITASGARSLEETLKRNGSSLVGISQNLVDLVWGKDRPAPPREKVRVHPDKFAGKTFQEKIADLRKELEKKKTAGFVISMLDEIAWLFNLRGSDIPYNPVFFAYAIITPTKAELYIDDDKITPEVVAHLGQDVVIKPYNSIFADAKALSEARKQEAGETASKFLLSNKASWALSLSLGGEEHVEETRSPIADAKAIKNEVELAGMRACHIRDGAALIEYFAWLENELVNKKTVLDEVDAADKLERIRTKHDLFAGLSFDTISSTGPNGAVIHYKPEKGTCSIIDPDAIYLCDSGAQYLDGTTDVTRTFHFGKPTELEKKAFTLVLKGLIAIDTAVFPKGTSGFALDALARQYLWKEGLDYLHGTGHGIGSYLNVHEGPIGIGTRVQYTEVPIAPGNVISDEPGFYEDGKFGIRIENVIMAREVQTTHKFGDKPWLGFEHVTMAPIGRNLIQPSLLSDLELKWVNDYHAEVWDKTHHFFENDEFTRSWLQRETAPITK.

4 residues coordinate Mn(2+): aspartate 449, aspartate 460, glutamate 558, and glutamate 572.

It belongs to the peptidase M24B family. The cofactor is Mn(2+).

The catalysed reaction is Release of any N-terminal amino acid, including proline, that is linked to proline, even from a dipeptide or tripeptide.. Catalyzes the removal of a penultimate prolyl residue from the N-termini of peptides. This is Probable Xaa-Pro aminopeptidase P (ampp) from Neosartorya fischeri (strain ATCC 1020 / DSM 3700 / CBS 544.65 / FGSC A1164 / JCM 1740 / NRRL 181 / WB 181) (Aspergillus fischerianus).